A 185-amino-acid polypeptide reads, in one-letter code: Thymidine kinase (185 aa).

17 to 24 (GPMFAGKT) serves as a coordination point for ATP. Glutamate 92 acts as the Proton acceptor in catalysis. Position 121 (phenylalanine 121) interacts with substrate. Residues cysteine 146 and cysteine 149 each contribute to the Zn(2+) site. 166–170 (LILAG) lines the substrate pocket. Zn(2+) contacts are provided by cysteine 179 and cysteine 182.

Belongs to the thymidine kinase family.

The enzyme catalyses thymidine + ATP = dTMP + ADP + H(+). Its function is as follows. Phosphorylates thymidine. ASFV replicates in the cytoplasm of infected cells and contains genes encoding a number of enzymes needed for DNA synthesis, including thymidine kinase. Important for growth in swine macrophages in vitro and is a virus virulence factor in swine. This chain is Thymidine kinase, found in African swine fever virus (isolate Pig/Kenya/KEN-50/1950) (ASFV).